A 108-amino-acid chain; its full sequence is MPHESSPDSQHEHGVAVEAARPEVAPPPFYQVMLLNDDYTPMDFVVDVLQQFFSMDLDKATQVMLHVHTRGRGVCGVFTREVAETKVAQVNEYSRMNQHPLLCTMEKA.

Residues 1–15 (MPHESSPDSQHEHGV) show a composition bias toward basic and acidic residues. The interval 1-22 (MPHESSPDSQHEHGVAVEAARP) is disordered.

It belongs to the ClpS family. Binds to the N-terminal domain of the chaperone ClpA.

Its function is as follows. Involved in the modulation of the specificity of the ClpAP-mediated ATP-dependent protein degradation. The chain is ATP-dependent Clp protease adapter protein ClpS from Stenotrophomonas maltophilia (strain K279a).